The chain runs to 403 residues: Na(+)/H(+) antiporter NhaA (403 aa).

12 consecutive transmembrane segments (helical) span residues 25–45 (IAGLVLLVSMLVAFFWVNSPF), 70–90 (LILWINEGLMIVFFFLIGLEI), 105–125 (IALPAFAALGGMLVPAAIFLA), 136–156 (GWAVPAATDIVLALALLAMLG), 165–185 (VFLTALAIFDDFGTLVIIALA), 188–208 (EGLSLPSLLMAALGTLALIVL), 213–233 (VASLTAYVLVGVFVWVSVLES), 234–254 (GVHSTLAGVIIAWCIPMRVSG), 269–289 (VALLIVPLFAFFNAGIDLGGV), 302–322 (IILGLFVGKQVGVMLGVGLAV), 340–360 (GAALLSGVGFTMSLFVAGLAF), and 369–389 (VNLAVVVGSVLSATGGLVVLA).

The protein belongs to the NhaA Na(+)/H(+) (TC 2.A.33) antiporter family.

It localises to the cell inner membrane. The catalysed reaction is Na(+)(in) + 2 H(+)(out) = Na(+)(out) + 2 H(+)(in). Its function is as follows. Na(+)/H(+) antiporter that extrudes sodium in exchange for external protons. In Maricaulis maris (strain MCS10) (Caulobacter maris), this protein is Na(+)/H(+) antiporter NhaA.